A 261-amino-acid polypeptide reads, in one-letter code: Membrane protein insertase MisCA (261 aa).

A signal peptide spans 1–22 (MLLKRRIGLLLSMVGVFMLLAG). A lipid anchor (N-palmitoyl cysteine) is attached at C23. Residue C23 is the site of S-diacylglycerol cysteine attachment. 5 helical membrane passes run 61 to 81 (YGLS…PLMI), 131 to 151 (LAGC…YHAI), 174 to 194 (YILP…MMAG), 204 to 224 (MMLW…PAAL), and 225 to 245 (SLYW…IKGP).

This sequence belongs to the OXA1/ALB3/YidC family. Type 2 subfamily. Mostly monomeric, it may also form dimers. Interacts with SpoIIIAE. Forms a complex with the F(1)F(0) ATP synthase in which can be found the alpha, beta, gamma, delta and epsilon subunits of F(1) and a, b and subunits of F(0). YqgA is found in the same complex.

The protein resides in the cell membrane. Functionally, required for the insertion and/or proper folding and/or complex formation of integral membrane proteins into the membrane. Involved in integration of membrane proteins that insert both dependently and independently of the Sec translocase complex, as well as at least some lipoproteins. Also involved in protein secretion processes. Essential for sporulation by activating sigma factor SpoIIIG/SigG after engulfment is completed in the prespore, maybe by acting on SpoIIIAE. It has an overlapping, although partly distinct, function compared to YqjG(MisCB). In Bacillus subtilis (strain 168), this protein is Membrane protein insertase MisCA (misCA).